The sequence spans 325 residues: Peroxidase 45 (325 aa).

The first 25 residues, 1 to 25, serve as a signal peptide directing secretion; the sequence is MEKNTSQTIFSNFFLLLLLSSCVSA. Cystine bridges form between Cys-36/Cys-115, Cys-69/Cys-74, Cys-121/Cys-321, and Cys-200/Cys-232. His-67 serves as the catalytic Proton acceptor. The Ca(2+) site is built by Asp-68, Val-71, Gly-73, Asp-75, and Ser-77. Pro-163 contributes to the substrate binding site. His-193 serves as a coordination point for heme b. Ca(2+) is bound at residue Thr-194. Ca(2+)-binding residues include Asp-245, Ser-248, and Asp-253.

Belongs to the peroxidase family. Classical plant (class III) peroxidase subfamily. The cofactor is heme b. Requires Ca(2+) as cofactor. In terms of tissue distribution, slightly expressed in roots.

It is found in the secreted. The enzyme catalyses 2 a phenolic donor + H2O2 = 2 a phenolic radical donor + 2 H2O. Removal of H(2)O(2), oxidation of toxic reductants, biosynthesis and degradation of lignin, suberization, auxin catabolism, response to environmental stresses such as wounding, pathogen attack and oxidative stress. These functions might be dependent on each isozyme/isoform in each plant tissue. The polypeptide is Peroxidase 45 (PER45) (Arabidopsis thaliana (Mouse-ear cress)).